The primary structure comprises 522 residues: Peptide chain release factor 3 (522 aa).

In terms of domain architecture, tr-type G spans 10-277 (ASRKTFAIIS…TFVDFAPAPS (268 aa)). GTP contacts are provided by residues 19-26 (SHPDAGKT), 87-91 (DTPGH), and 141-144 (NKMD).

Belongs to the TRAFAC class translation factor GTPase superfamily. Classic translation factor GTPase family. PrfC subfamily.

It localises to the cytoplasm. Its function is as follows. Increases the formation of ribosomal termination complexes and stimulates activities of RF-1 and RF-2. It binds guanine nucleotides and has strong preference for UGA stop codons. It may interact directly with the ribosome. The stimulation of RF-1 and RF-2 is significantly reduced by GTP and GDP, but not by GMP. This Listeria monocytogenes serovar 1/2a (strain ATCC BAA-679 / EGD-e) protein is Peptide chain release factor 3.